A 538-amino-acid polypeptide reads, in one-letter code: ATP-dependent rRNA helicase RRP3 (538 aa).

The segment covering 1–11 (MSSAKRVKLSH) has biased composition (basic residues). The interval 1-112 (MSSAKRVKLS…SKEETPTKSF (112 aa)) is disordered. Residues 34-47 (KKITQAPKAAAPIK) are compositionally biased toward low complexity. The segment covering 53–85 (AEEDDDDDDKDDKDEEDEEQNDDSSDEASENDD) has biased composition (acidic residues). The segment covering 92-112 (EATKEGQTELPSKEETPTKSF) has biased composition (basic and acidic residues). Positions 110 to 138 (KSFRDLGIVEPLCEACEALKFKKPTPIQE) match the Q motif motif. The 172-residue stretch at 141-312 (IPLALQGRDV…RASLRDPLKV (172 aa)) folds into the Helicase ATP-binding domain. Position 154–161 (154–161 (AETGSGKT)) interacts with ATP. Residues 260–263 (DEAD) carry the DEAD box motif. Residues 336–486 (HKDVYLIYLA…LFQPDKEEVM (151 aa)) form the Helicase C-terminal domain. Over residues 498–512 (HAREEMKALHEDRGK) the composition is skewed to basic and acidic residues. The interval 498 to 538 (HAREEMKALHEDRGKKGAVLKGRKRGSATKRRHDDMDAEEG) is disordered. Positions 513–528 (KGAVLKGRKRGSATKR) are enriched in basic residues.

Belongs to the DEAD box helicase family. DDX47/RRP3 subfamily. In terms of assembly, interacts with the SSU processome.

It localises to the nucleus. The enzyme catalyses ATP + H2O = ADP + phosphate + H(+). Its function is as follows. ATP-dependent rRNA helicase required for pre-ribosomal RNA processing. Involved in the maturation of the 35S-pre-rRNA and to its cleavage to mature 18S rRNA. In Pyricularia oryzae (strain 70-15 / ATCC MYA-4617 / FGSC 8958) (Rice blast fungus), this protein is ATP-dependent rRNA helicase RRP3.